We begin with the raw amino-acid sequence, 517 residues long: Ribose import ATP-binding protein RbsA 1 (517 aa).

ABC transporter domains lie at 11–251 (LEMR…VGRD) and 263–507 (YDPG…ALAT). 43 to 50 (GENGAGKS) is a binding site for ATP.

It belongs to the ABC transporter superfamily. Ribose importer (TC 3.A.1.2.1) family. As to quaternary structure, the complex is composed of an ATP-binding protein (RbsA), two transmembrane proteins (RbsC) and a solute-binding protein (RbsB).

It is found in the cell inner membrane. The catalysed reaction is D-ribose(out) + ATP + H2O = D-ribose(in) + ADP + phosphate + H(+). Its function is as follows. Part of the ABC transporter complex RbsABC involved in ribose import. Responsible for energy coupling to the transport system. This chain is Ribose import ATP-binding protein RbsA 1, found in Burkholderia cenocepacia (strain HI2424).